Consider the following 302-residue polypeptide: Sulfate adenylyltransferase subunit 2 (302 aa).

The interval arginine 280–phenylalanine 302 is disordered.

Belongs to the PAPS reductase family. CysD subfamily. As to quaternary structure, heterodimer composed of CysD, the smaller subunit, and CysN.

The catalysed reaction is sulfate + ATP + H(+) = adenosine 5'-phosphosulfate + diphosphate. It functions in the pathway sulfur metabolism; hydrogen sulfide biosynthesis; sulfite from sulfate: step 1/3. Its function is as follows. With CysN forms the ATP sulfurylase (ATPS) that catalyzes the adenylation of sulfate producing adenosine 5'-phosphosulfate (APS) and diphosphate, the first enzymatic step in sulfur assimilation pathway. APS synthesis involves the formation of a high-energy phosphoric-sulfuric acid anhydride bond driven by GTP hydrolysis by CysN coupled to ATP hydrolysis by CysD. The protein is Sulfate adenylyltransferase subunit 2 of Shewanella amazonensis (strain ATCC BAA-1098 / SB2B).